We begin with the raw amino-acid sequence, 104 residues long: Large ribosomal subunit protein uL24 (104 aa).

Belongs to the universal ribosomal protein uL24 family. As to quaternary structure, part of the 50S ribosomal subunit.

In terms of biological role, one of two assembly initiator proteins, it binds directly to the 5'-end of the 23S rRNA, where it nucleates assembly of the 50S subunit. Its function is as follows. One of the proteins that surrounds the polypeptide exit tunnel on the outside of the subunit. The chain is Large ribosomal subunit protein uL24 from Treponema denticola (strain ATCC 35405 / DSM 14222 / CIP 103919 / JCM 8153 / KCTC 15104).